We begin with the raw amino-acid sequence, 137 residues long: Fatty acid-binding protein homolog 8 (137 aa).

Positions 24–34 (KEIGVGLLIRK) match the Nuclear localization signal motif.

Belongs to the calycin superfamily. Fatty-acid binding protein (FABP) family. As to quaternary structure, monomer. As to expression, intestine.

It is found in the lysosome. Its subcellular location is the nucleus. Lysosomal lipid chaperone which binds to a wide range of unsaturated fatty acids, including high affinity binding to oleic acid and oleoylethanolamide, to transport them into the nucleus. As part of a lysosome-to-nucleus retrograde lipid signaling pathway, translocates into the nucleus where it activates the transcription of genes promoting longevity and activation of mitochondrial beta oxidation. The protein is Fatty acid-binding protein homolog 8 of Caenorhabditis elegans.